The primary structure comprises 205 residues: Urease accessory protein UreE (205 aa).

The tract at residues 171-205 (AHEAHPHAHSHAGGHGHVHSGHGHGGKHGEHDAES) is disordered. Residues 177 to 196 (HAHSHAGGHGHVHSGHGHGG) are compositionally biased toward basic residues.

Belongs to the UreE family.

Its subcellular location is the cytoplasm. Its function is as follows. Involved in urease metallocenter assembly. Binds nickel. Probably functions as a nickel donor during metallocenter assembly. This Bordetella bronchiseptica (strain ATCC BAA-588 / NCTC 13252 / RB50) (Alcaligenes bronchisepticus) protein is Urease accessory protein UreE.